Here is a 254-residue protein sequence, read N- to C-terminus: Ribosomal RNA large subunit methyltransferase E (254 aa).

Residues 1–18 (MTNSGKTGGKSGKGGTGG) are compositionally biased toward gly residues. The tract at residues 1-26 (MTNSGKTGGKSGKGGTGGARALKVRV) is disordered. Positions 89, 91, 119, 135, and 159 each coordinate S-adenosyl-L-methionine. The active-site Proton acceptor is Lys199.

The protein belongs to the class I-like SAM-binding methyltransferase superfamily. RNA methyltransferase RlmE family.

The protein resides in the cytoplasm. The enzyme catalyses uridine(2552) in 23S rRNA + S-adenosyl-L-methionine = 2'-O-methyluridine(2552) in 23S rRNA + S-adenosyl-L-homocysteine + H(+). Specifically methylates the uridine in position 2552 of 23S rRNA at the 2'-O position of the ribose in the fully assembled 50S ribosomal subunit. The protein is Ribosomal RNA large subunit methyltransferase E of Parvibaculum lavamentivorans (strain DS-1 / DSM 13023 / NCIMB 13966).